A 213-amino-acid chain; its full sequence is Ribonuclease T (213 aa).

The 175-residue stretch at 28–202 (VVVDVETGGF…YDTEQTARLF (175 aa)) folds into the Exonuclease domain. 4 residues coordinate Mg(2+): D31, E33, H189, and D194. H189 serves as the catalytic Proton donor/acceptor.

Belongs to the RNase T family. In terms of assembly, homodimer. Requires Mg(2+) as cofactor.

Its function is as follows. Trims short 3' overhangs of a variety of RNA species, leaving a one or two nucleotide 3' overhang. Responsible for the end-turnover of tRNA: specifically removes the terminal AMP residue from uncharged tRNA (tRNA-C-C-A). Also appears to be involved in tRNA biosynthesis. The chain is Ribonuclease T from Xanthomonas axonopodis pv. citri (strain 306).